A 611-amino-acid polypeptide reads, in one-letter code: mRNA export factor GLE1 (611 aa).

Disordered regions lie at residues 69 to 94 (SEDE…SQIC) and 220 to 243 (KIRS…EKIR). Positions 71–89 (DEMESDEGEESDDEEEEED) are enriched in acidic residues.

Belongs to the GLE1 family. In terms of assembly, part of the nuclear pore complex (NPC). The NPC has an eight-fold symmetrical structure comprising a central transport channel and two rings, the cytoplasmic and nuclear rings, to which eight filaments are attached. The cytoplasmic filaments have loose ends, while the nuclear filaments are joined in a distal ring, forming a nuclear basket. NPCs are highly dynamic in configuration and composition, and can be devided in 3 subcomplexes, the NUP62 subcomplex, the NUP107-160 subcomplex and the NUP93 subcomplex, containing approximately 30 different nucleoporin proteins.

It localises to the nucleus envelope. It is found in the nucleus. Its subcellular location is the nuclear pore complex. In terms of biological role, required for seed viability. This Arabidopsis thaliana (Mouse-ear cress) protein is mRNA export factor GLE1.